Here is a 217-residue protein sequence, read N- to C-terminus: Probable transaldolase (217 aa).

The Schiff-base intermediate with substrate role is filled by K83.

The protein belongs to the transaldolase family. Type 3B subfamily.

The protein localises to the cytoplasm. It catalyses the reaction D-sedoheptulose 7-phosphate + D-glyceraldehyde 3-phosphate = D-erythrose 4-phosphate + beta-D-fructose 6-phosphate. It functions in the pathway carbohydrate degradation; pentose phosphate pathway; D-glyceraldehyde 3-phosphate and beta-D-fructose 6-phosphate from D-ribose 5-phosphate and D-xylulose 5-phosphate (non-oxidative stage): step 2/3. Its function is as follows. Transaldolase is important for the balance of metabolites in the pentose-phosphate pathway. This chain is Probable transaldolase, found in Pseudothermotoga lettingae (strain ATCC BAA-301 / DSM 14385 / NBRC 107922 / TMO) (Thermotoga lettingae).